The sequence spans 110 residues: HIT-like protein CPn_0488/CP_0266/CPj0488/CpB0508 (110 aa).

The 108-residue stretch at 3–110 folds into the HIT domain; it reads VFKQIIDGLI…LGGRPLGAIA (108 aa). Positions 95–99 match the Histidine triad motif motif; it reads HLHIH.

The protein is HIT-like protein CPn_0488/CP_0266/CPj0488/CpB0508 of Chlamydia pneumoniae (Chlamydophila pneumoniae).